A 138-amino-acid chain; its full sequence is ATP synthase epsilon chain (138 aa).

It belongs to the ATPase epsilon chain family. As to quaternary structure, F-type ATPases have 2 components, CF(1) - the catalytic core - and CF(0) - the membrane proton channel. CF(1) has five subunits: alpha(3), beta(3), gamma(1), delta(1), epsilon(1). CF(0) has three main subunits: a, b and c.

Its subcellular location is the cell membrane. In terms of biological role, produces ATP from ADP in the presence of a proton gradient across the membrane. This is ATP synthase epsilon chain from Streptococcus equinus (Streptococcus bovis).